A 339-amino-acid chain; its full sequence is Phosphate acyltransferase (339 aa).

This sequence belongs to the PlsX family. In terms of assembly, homodimer. Probably interacts with PlsY.

It is found in the cytoplasm. The catalysed reaction is a fatty acyl-[ACP] + phosphate = an acyl phosphate + holo-[ACP]. It participates in lipid metabolism; phospholipid metabolism. Functionally, catalyzes the reversible formation of acyl-phosphate (acyl-PO(4)) from acyl-[acyl-carrier-protein] (acyl-ACP). This enzyme utilizes acyl-ACP as fatty acyl donor, but not acyl-CoA. This Ruthia magnifica subsp. Calyptogena magnifica protein is Phosphate acyltransferase.